The primary structure comprises 258 residues: Redox-sensing transcriptional repressor Rex (258 aa).

A DNA-binding region (H-T-H motif) is located at residues 26 to 65; it reads LYLRALTALSERSVPTVSSEELAAAAGVNSAKLRKDFSYL. 100 to 105 contributes to the NAD(+) binding site; that stretch reads GIGNLG. Residues 219–258 are disordered; the sequence is AGEEAAADGAAPPVAARKQQRSTGSADQGPDGDVPAVMPA. Positions 225-234 are enriched in low complexity; that stretch reads ADGAAPPVAA.

It belongs to the transcriptional regulatory Rex family. Homodimer.

It localises to the cytoplasm. In terms of biological role, modulates transcription of respiratory genes in response to changes in cellular NADH/NAD(+) redox state. Binds to the DNA sequence motif 5'-TGTGAACGCGTTCACA-3' in the promoter of the cydABCD operon. May play a general role as a sensor of cellular redox balance. The sequence is that of Redox-sensing transcriptional repressor Rex from Streptomyces coelicolor (strain ATCC BAA-471 / A3(2) / M145).